A 241-amino-acid chain; its full sequence is Urease accessory protein UreF 1 (241 aa).

Belongs to the UreF family. UreD, UreF and UreG form a complex that acts as a GTP-hydrolysis-dependent molecular chaperone, activating the urease apoprotein by helping to assemble the nickel containing metallocenter of UreC. The UreE protein probably delivers the nickel.

The protein resides in the cytoplasm. In terms of biological role, required for maturation of urease via the functional incorporation of the urease nickel metallocenter. The protein is Urease accessory protein UreF 1 of Brucella melitensis biotype 1 (strain ATCC 23456 / CCUG 17765 / NCTC 10094 / 16M).